A 65-amino-acid polypeptide reads, in one-letter code: Large ribosomal subunit protein bL35 (65 aa).

This sequence belongs to the bacterial ribosomal protein bL35 family.

The polypeptide is Large ribosomal subunit protein bL35 (Clostridium botulinum (strain Loch Maree / Type A3)).